Here is a 395-residue protein sequence, read N- to C-terminus: Inner membrane protein YjgN (395 aa).

Topologically, residues 1 to 24 (MNNVISSKDNHNHTLVFTGKGGKY) are cytoplasmic. A helical membrane pass occupies residues 25–45 (FVICLVNFLLTCITLGIYAPW). The Periplasmic portion of the chain corresponds to 46-71 (AMVKCRRYIYTNMTLNNQPFAYKATG). A helical membrane pass occupies residues 72-92 (GALFISVLLVFIIYIVSLSLI). At 93 to 95 (EHG) the chain is on the cytoplasmic side. The helical transmembrane segment at 96 to 116 (HPGLGFTLFGLLIAIIPFMAV) threads the bilayer. Topologically, residues 117–146 (KGLQYQAMMTSLNGVHFGFQCSMRRAWWYM) are periplasmic. Residues 147-167 (FALPVLLMVALYIVLYIISLV) form a helical membrane-spanning segment. Position 168 (Thr-168) is a topological domain, cytoplasmic. A helical membrane pass occupies residues 169–189 (IAVGGLVFSIVFLGLLAIIGI). Residues 190–229 (GVINGITYSKWMTLFGNGANFGIHRFSIQVNVKTCIRGCV) are Periplasmic-facing. The chain crosses the membrane as a helical span at residues 230–250 (LAMLTLFPFAVVIGYLIAPVF). Topologically, residues 251-275 (TDMILLSMMGNAQAGGALILQYYGQ) are cytoplasmic. Residues 276–296 (IMACYFLYFLAIIVVTSYLYV) form a helical membrane-spanning segment. The Periplasmic segment spans residues 297 to 327 (ALRNLFLNNLSLANDSIRFHSSVTAHGMLWR). Residues 328-348 (LLVVFVISGVTLGLAYPWLKI) traverse the membrane as a helical segment. At 349 to 395 (WLVSWLAQNTQVQGDLDSLELTNDEKPLENSPLMWISRGIMPYFPFI) the chain is on the cytoplasmic side.

The protein localises to the cell inner membrane. This Salmonella typhimurium (strain LT2 / SGSC1412 / ATCC 700720) protein is Inner membrane protein YjgN (yjgN).